The chain runs to 1236 residues: ATP-dependent helicase/nuclease subunit A (1236 aa).

Residues 4-473 enclose the UvrD-like helicase ATP-binding domain; sequence VKWTKEQQQA…VNLFKNFRSR (470 aa). Position 25–32 (25–32) interacts with ATP; the sequence is AAAGSGKT. Residues 512–806 enclose the UvrD-like helicase C-terminal domain; it reads YEDKSLVGGP…RIMSIHKSKG (295 aa).

It belongs to the helicase family. AddA subfamily. As to quaternary structure, heterodimer of AddA and AddB/RexB. Mg(2+) is required as a cofactor.

It catalyses the reaction Couples ATP hydrolysis with the unwinding of duplex DNA by translocating in the 3'-5' direction.. The enzyme catalyses ATP + H2O = ADP + phosphate + H(+). Its function is as follows. The heterodimer acts as both an ATP-dependent DNA helicase and an ATP-dependent, dual-direction single-stranded exonuclease. Recognizes the chi site generating a DNA molecule suitable for the initiation of homologous recombination. The AddA nuclease domain is required for chi fragment generation; this subunit has the helicase and 3' -&gt; 5' nuclease activities. The protein is ATP-dependent helicase/nuclease subunit A of Clostridium novyi (strain NT).